The chain runs to 489 residues: Palmitoyltransferase ZDHHC14 (489 aa).

The Cytoplasmic segment spans residues 1-60 (MPPGGGGPMKDCEYSQISTHSSSPMESPHKKKKIAARRKWEVFPGRNKFFCNGRIMMARQ). The chain crosses the membrane as a helical span at residues 61 to 81 (TGVFYLTLILILVTSGLFFAF). Topologically, residues 82 to 89 (DCRYLAEK) are lumenal. Residues 90–110 (ITPAIPVVGGILFFFVMGTLL) traverse the membrane as a helical segment. At 111 to 208 (RTSFSDPGVL…GNCVGKRNYR (98 aa)) the chain is on the cytoplasmic side. One can recognise a DHHC domain in the interval 165 to 215 (KYCFTCKIFRPPRASHCSLCDNCVEQFDHHCPWVGNCVGKRNYRFFYMFIL). The S-palmitoyl cysteine intermediate role is filled by Cys195. A helical membrane pass occupies residues 209–229 (FFYMFILSLSFLTVFIFAFVI). Residues 230–255 (THVIHRSQQKGFLDALKDSPASVLEA) are Lumenal-facing. Residues 256–276 (VICFFSVWSIIGLSGFHTYLI) form a helical membrane-spanning segment. The Cytoplasmic portion of the chain corresponds to 277–489 (SSNQTTNEDI…VRGLVKLSSV (213 aa)). The disordered stretch occupies residues 434 to 454 (HGGHQFLTPDEAPSPPRMLGA). Residue Ser456 is modified to Phosphoserine.

This sequence belongs to the DHHC palmitoyltransferase family. ERF2/ZDHHC9 subfamily.

The protein resides in the endoplasmic reticulum membrane. It is found in the golgi apparatus membrane. It carries out the reaction L-cysteinyl-[protein] + hexadecanoyl-CoA = S-hexadecanoyl-L-cysteinyl-[protein] + CoA. Functionally, palmitoyltransferase that could catalyze the addition of palmitate onto various protein substrates. May have a palmitoyltransferase activity toward the beta-2 adrenergic receptor/ADRB2 and thereby regulate G protein-coupled receptor signaling. May play a role in cell differentiation and apoptosis. The protein is Palmitoyltransferase ZDHHC14 of Mus musculus (Mouse).